We begin with the raw amino-acid sequence, 451 residues long: Gamma-aminobutyric acid receptor subunit alpha-2 (451 aa).

An N-terminal signal peptide occupies residues 1–28 (MKTKLSTCNVWSLLLVLLVWDPVRLVLA). Residues 29-249 (NIQEDEAKNN…MTAHFHLKRK (221 aa)) are Extracellular-facing. Residue Asn38 is glycosylated (N-linked (GlcNAc...) asparagine). Arg94 is a 4-aminobutanoate binding site. Asn138 carries N-linked (GlcNAc...) asparagine glycosylation. Thr157 provides a ligand contact to 4-aminobutanoate. Cys166 and Cys180 are disulfide-bonded. A helical transmembrane segment spans residues 250-270 (IGYFVIQTYLPCIMTVILSQV). The Cytoplasmic segment spans residues 271–280 (SFWLNRESVP). The helical transmembrane segment at 281–300 (ARTVFGVTTVLTMTTLSISA) threads the bilayer. Over 301 to 311 (RNSLPKVAYAT) the chain is Extracellular. Residues 312–332 (AMDWFIAVCYAFVFSALIEFA) traverse the membrane as a helical segment. At 333 to 420 (TVNYFTKRGW…FNSVSKIDRM (88 aa)) the chain is on the cytoplasmic side. Positions 389-408 (KSATTPEPNKKPENKPAEAK) are disordered. Residues 396–408 (PNKKPENKPAEAK) show a composition bias toward basic and acidic residues. Residues 421–441 (SRIVFPVLFGTFNLVYWATYL) form a helical membrane-spanning segment. Residues 442 to 451 (NREPVLGVSP) lie on the Extracellular side of the membrane.

This sequence belongs to the ligand-gated ion channel (TC 1.A.9) family. Gamma-aminobutyric acid receptor (TC 1.A.9.5) subfamily. GABRA2 sub-subfamily. In terms of assembly, heteropentamer, formed by a combination of alpha (GABRA1-6), beta (GABRB1-3), gamma (GABRG1-3), delta (GABRD), epsilon (GABRE), rho (GABRR1-3), pi (GABRP) and theta (GABRQ) subunits, each subunit exhibiting distinct physiological and pharmacological properties. Interacts with UBQLN1. Interacts with KIF21B. Interacts with LHFPL4. Interacts with SHISA7; interaction leads to the regulation of GABA(A) receptor trafficking, channel deactivation kinetics and pharmacology. Post-translationally, glycosylated.

It is found in the postsynaptic cell membrane. The protein resides in the cell membrane. It localises to the cytoplasmic vesicle membrane. The protein localises to the cell projection. Its subcellular location is the dendrite. The enzyme catalyses chloride(in) = chloride(out). With respect to regulation, activated by pentobarbital. Inhibited by the antagonist bicuculline. Alpha subunit of the heteropentameric ligand-gated chloride channel gated by gamma-aminobutyric acid (GABA), a major inhibitory neurotransmitter in the brain. GABA-gated chloride channels, also named GABA(A) receptors (GABAAR), consist of five subunits arranged around a central pore and contain GABA active binding site(s) located at the alpha and beta subunit interface(s). When activated by GABA, GABAARs selectively allow the flow of chloride anions across the cell membrane down their electrochemical gradient. Chloride influx into the postsynaptic neuron following GABAAR opening decreases the neuron ability to generate a new action potential, thereby reducing nerve transmission. The alpha-2 subunit exhibits synaptogenic activity together with beta-2 and very little to no activity together with beta-3, the gamma-2 subunit being necessary but not sufficient to induce rapid synaptic contacts formation. The chain is Gamma-aminobutyric acid receptor subunit alpha-2 from Mus musculus (Mouse).